The following is a 182-amino-acid chain: ATP-dependent protease subunit HslV (182 aa).

Residue Thr6 is part of the active site. The Na(+) site is built by Ala164, Cys167, and Thr170.

The protein belongs to the peptidase T1B family. HslV subfamily. As to quaternary structure, a double ring-shaped homohexamer of HslV is capped on each side by a ring-shaped HslU homohexamer. The assembly of the HslU/HslV complex is dependent on binding of ATP.

It localises to the cytoplasm. It carries out the reaction ATP-dependent cleavage of peptide bonds with broad specificity.. Its activity is regulated as follows. Allosterically activated by HslU binding. Its function is as follows. Protease subunit of a proteasome-like degradation complex believed to be a general protein degrading machinery. This chain is ATP-dependent protease subunit HslV, found in Borreliella afzelii (strain PKo) (Borrelia afzelii).